The sequence spans 277 residues: Phosphoenolpyruvate synthase regulatory protein (277 aa).

Position 157–164 (157–164 (GVSRCGKT)) interacts with ADP.

This sequence belongs to the pyruvate, phosphate/water dikinase regulatory protein family. PSRP subfamily.

It carries out the reaction [pyruvate, water dikinase] + ADP = [pyruvate, water dikinase]-phosphate + AMP + H(+). The catalysed reaction is [pyruvate, water dikinase]-phosphate + phosphate + H(+) = [pyruvate, water dikinase] + diphosphate. In terms of biological role, bifunctional serine/threonine kinase and phosphorylase involved in the regulation of the phosphoenolpyruvate synthase (PEPS) by catalyzing its phosphorylation/dephosphorylation. This Escherichia coli O17:K52:H18 (strain UMN026 / ExPEC) protein is Phosphoenolpyruvate synthase regulatory protein.